Reading from the N-terminus, the 295-residue chain is 4-diphosphocytidyl-2-C-methyl-D-erythritol kinase (295 aa).

Lysine 22 is a catalytic residue. 106–116 is an ATP binding site; the sequence is PAGGGFGGGSS. Aspartate 148 is a catalytic residue.

Belongs to the GHMP kinase family. IspE subfamily.

The enzyme catalyses 4-CDP-2-C-methyl-D-erythritol + ATP = 4-CDP-2-C-methyl-D-erythritol 2-phosphate + ADP + H(+). It functions in the pathway isoprenoid biosynthesis; isopentenyl diphosphate biosynthesis via DXP pathway; isopentenyl diphosphate from 1-deoxy-D-xylulose 5-phosphate: step 3/6. Its function is as follows. Catalyzes the phosphorylation of the position 2 hydroxy group of 4-diphosphocytidyl-2C-methyl-D-erythritol. This Xanthomonas euvesicatoria pv. vesicatoria (strain 85-10) (Xanthomonas campestris pv. vesicatoria) protein is 4-diphosphocytidyl-2-C-methyl-D-erythritol kinase.